The sequence spans 239 residues: Pyridoxine 5'-phosphate synthase (239 aa).

N7 is a 3-amino-2-oxopropyl phosphate binding site. 9-10 (DH) is a binding site for 1-deoxy-D-xylulose 5-phosphate. R18 serves as a coordination point for 3-amino-2-oxopropyl phosphate. The Proton acceptor role is filled by H43. 2 residues coordinate 1-deoxy-D-xylulose 5-phosphate: R45 and H50. E70 acts as the Proton acceptor in catalysis. Position 100 (T100) interacts with 1-deoxy-D-xylulose 5-phosphate. H191 acts as the Proton donor in catalysis. 3-amino-2-oxopropyl phosphate contacts are provided by residues G192 and 213 to 214 (GH).

The protein belongs to the PNP synthase family. In terms of assembly, homooctamer; tetramer of dimers.

It localises to the cytoplasm. It carries out the reaction 3-amino-2-oxopropyl phosphate + 1-deoxy-D-xylulose 5-phosphate = pyridoxine 5'-phosphate + phosphate + 2 H2O + H(+). It participates in cofactor biosynthesis; pyridoxine 5'-phosphate biosynthesis; pyridoxine 5'-phosphate from D-erythrose 4-phosphate: step 5/5. Catalyzes the complicated ring closure reaction between the two acyclic compounds 1-deoxy-D-xylulose-5-phosphate (DXP) and 3-amino-2-oxopropyl phosphate (1-amino-acetone-3-phosphate or AAP) to form pyridoxine 5'-phosphate (PNP) and inorganic phosphate. The chain is Pyridoxine 5'-phosphate synthase from Gloeobacter violaceus (strain ATCC 29082 / PCC 7421).